The following is a 249-amino-acid chain: Pyridoxamine 5'-phosphate oxidase family protein ustO (249 aa).

21–24 provides a ligand contact to substrate; sequence LFFV. Residues 76–81, 91–92, arginine 105, and 163–164 each bind FMN; these read ATVMFC and RL. 215–217 contributes to the substrate binding site; sequence ASY. A helical transmembrane segment spans residues 227 to 247; it reads TGMALMFLVMVVAQWVGYVLY.

This sequence belongs to the pyridoxamine 5'-phosphate oxidase family. FMN serves as cofactor.

It is found in the membrane. Its pathway is mycotoxin biosynthesis. Pyridoxamine 5'-phosphate oxidase family protein; part of the gene cluster that mediates the biosynthesis of the secondary metabolite ustiloxin B, an antimitotic tetrapeptide. First, ustA is processed by the subtilisin-like endoprotease Kex2 that is outside the ustiloxin B gene cluster, at the C-terminal side of Arg-Lys, after transfer to Golgi apparatus through the endoplasmic reticulum (ER). Cleavage by KEX2 generates 16 peptides YAIG-I to YAIG-XVI. To process the precursor peptide further, at least two peptidases are necessary to cleave the N-terminal and C-terminal sides of the Tyr-Ala-Ile-Gly core peptide which serves as backbone for the synthesis of ustiloxin B, through cyclization and modification of the tyrosine with a non-protein coding amino acid, norvaline. One of the two peptidases must be the serine peptidase ustP; and the other pepdidase is probably ustH. Macrocyclization of the core peptide derived from ustA requires the tyrosinase ustQ, as well as the homologous oxidases ustYa and ustYb, and leads to the production of the first cyclization product N-desmethylustiloxin F. For the formation of N-desmethylustiloxin F, three oxidation steps are required, hydroxylation at the benzylic position, hydroxylation at either the aromatic ring of Tyr or beta-position of Ile, and oxidative cyclization. UstQ may catalyze the oxidation of a phenol moiety, whereas the ustYa and ustYb are most likely responsible for the remaining two-step oxidations. N-desmethylustiloxin F is then methylated by ustM to yield ustiloxin F which in turn substrate of the cytochrome P450 monooxygenase ustC which catalyzes the formation of S-deoxyustiloxin H. The flavoprotein monooxygenases ustF1 and ustF2 then participate in the modification of the side chain of S-deoxyustiloxin H, leading to the synthesis of an oxime intermediate, via ustiloxin H. Finally, carboxylative dehydration performed by the cysteine desulfurase-like protein ustD yields ustiloxin B. This is Pyridoxamine 5'-phosphate oxidase family protein ustO from Aspergillus flavus (strain ATCC 200026 / FGSC A1120 / IAM 13836 / NRRL 3357 / JCM 12722 / SRRC 167).